The chain runs to 295 residues: Ribosomal protein L11 methyltransferase (295 aa).

Residues Thr139, Gly166, Asp188, and Asn231 each contribute to the S-adenosyl-L-methionine site.

It belongs to the methyltransferase superfamily. PrmA family.

The protein localises to the cytoplasm. The catalysed reaction is L-lysyl-[protein] + 3 S-adenosyl-L-methionine = N(6),N(6),N(6)-trimethyl-L-lysyl-[protein] + 3 S-adenosyl-L-homocysteine + 3 H(+). Its function is as follows. Methylates ribosomal protein L11. The chain is Ribosomal protein L11 methyltransferase from Cyanothece sp. (strain PCC 7425 / ATCC 29141).